We begin with the raw amino-acid sequence, 492 residues long: NADH-quinone oxidoreductase subunit N (492 aa).

Transmembrane regions (helical) follow at residues 5 to 25 (PMTALLPDALVMAAIVVAWLI), 37 to 57 (TYFIALLSTVVAGIWFAIDAL), 72 to 92 (VVDPFASVMKAVVSLGYAVSI), 104 to 124 (LYEGNFFLLGMFSLLGQLVMI), 129 to 149 (FLTLYLGLELMSLSLYAAIAL), 164 to 184 (YVLGALASGFLLYGISMLYGA), 205 to 225 (VVLLFGVIFIVAGVAFKMGAV), 239 to 259 (PTAMTLIVGGGPKVAAFAWGL), 276 to 295 (MLVILAALSLIVGNITGIVQ), 302 to 322 (LAYSAISNMGFVLLGLLAGVV), 337 to 357 (MFYSIVYLITTLGSFGVVMLL), 380 to 400 (FAFVMMVMMFSLAGIPPAVGF), 414 to 434 (GLTWLAVLAVITSLFGAFYYL), and 466 to 486 (VAVLVLGIVPGPLMSICLNAI).

Belongs to the complex I subunit 2 family. As to quaternary structure, NDH-1 is composed of 14 different subunits. Subunits NuoA, H, J, K, L, M, N constitute the membrane sector of the complex.

It localises to the cell inner membrane. It catalyses the reaction a quinone + NADH + 5 H(+)(in) = a quinol + NAD(+) + 4 H(+)(out). In terms of biological role, NDH-1 shuttles electrons from NADH, via FMN and iron-sulfur (Fe-S) centers, to quinones in the respiratory chain. The immediate electron acceptor for the enzyme in this species is believed to be ubiquinone. Couples the redox reaction to proton translocation (for every two electrons transferred, four hydrogen ions are translocated across the cytoplasmic membrane), and thus conserves the redox energy in a proton gradient. The protein is NADH-quinone oxidoreductase subunit N of Paraburkholderia phymatum (strain DSM 17167 / CIP 108236 / LMG 21445 / STM815) (Burkholderia phymatum).